Reading from the N-terminus, the 1101-residue chain is ATP-citrate synthase (1101 aa).

Residues 4 to 265 enclose the ATP-grasp domain; it reads KAISEQTGKE…LDAKSGASLK (262 aa). Positions 58, 66, 67, 109, 111, and 118 each coordinate ATP. The residue at position 131 (tyrosine 131) is a Phosphotyrosine. Aspartate 216 serves as a coordination point for ATP. The Mg(2+) site is built by aspartate 257, serine 260, and alanine 262. Position 263 is a phosphoserine (serine 263). Citrate contacts are provided by glycine 309, asparagine 346, threonine 348, tyrosine 364, and arginine 379. Residues 441–457 show a composition bias toward low complexity; it reads ASGSTSTPAPSRTASFS. Residues 441–487 are disordered; that stretch reads ASGSTSTPAPSRTASFSESRADEVAPAKKAKPAMPQDSVPSPRSLQG. Position 447 is a phosphothreonine (threonine 447). Serine 451 is subject to Phosphoserine. Position 455 is a phosphoserine; by PKA and PKB/AKT1 or PKB/AKT2 or BCKDK (serine 455). Serine 459 and serine 481 each carry phosphoserine. Residues 478–487 show a composition bias toward polar residues; it reads SVPSPRSLQG. N6-acetyllysine; alternate occurs at positions 540, 546, and 554. Residues lysine 540, lysine 546, and lysine 554 each participate in a glycyl lysine isopeptide (Lys-Gly) (interchain with G-Cter in ubiquitin); alternate cross-link. Threonine 639 bears the Phosphothreonine mark. Phosphoserine is present on serine 663. At tyrosine 682 the chain carries Phosphotyrosine. The active-site Tele-phosphohistidine intermediate is histidine 760. 779–789 is a CoA binding site; sequence LKEAGVFVPRS. Position 839 is a phosphoserine (serine 839). N6-acetyllysine is present on residues lysine 948, lysine 968, lysine 978, and lysine 1077. A Phosphoserine modification is found at serine 1100.

The protein in the N-terminal section; belongs to the succinate/malate CoA ligase beta subunit family. It in the C-terminal section; belongs to the succinate/malate CoA ligase alpha subunit family. Homotetramer. Mg(2+) serves as cofactor. Post-translationally, phosphorylated by PKA and GSK3 in a sequential manner; phosphorylation results in activation of its activity. Phosphorylation on Thr-447 and Ser-451 depends on the phosphorylation state of Ser-455. Phosphorylation on Ser-455 is decreased by prior phosphorylation on the other 2 residues. Phosphorylated at Ser-455 by BCKDK and dephosphorylated by protein phosphatase PPM1K. ISGylated. In terms of processing, acetylated at Lys-540, Lys-546 and Lys-554 by KAT2B/PCAF. Acetylation is promoted by glucose and stabilizes the protein, probably by preventing ubiquitination at the same sites. Acetylation promotes de novo lipid synthesis. Deacetylated by SIRT2. Post-translationally, ubiquitinated at Lys-540, Lys-546 and Lys-554 by the BCR(KLHL25) E3 ubiquitin ligase complex and UBR4, leading to its degradation. Ubiquitination is probably inhibited by acetylation at same site. BCR(KLHL25)-mediated degradation of ACLY promotes fatty acid oxidation and is required for differentiation of inducible regulatory T (iTreg) cells.

The protein localises to the cytoplasm. It is found in the cytosol. The catalysed reaction is oxaloacetate + acetyl-CoA + ADP + phosphate = citrate + ATP + CoA. Its activity is regulated as follows. Phosphorylation results in activation of its activity. Glucose 6-phosphate, fructose 6-phosphate, fructose 2,6-bisphosphate, ribulose 5-phosphate, and fructose 1,6-bisphosphate also act as activators. Catalyzes the cleavage of citrate into oxaloacetate and acetyl-CoA, the latter serving as common substrate in multiple biochemical reactions in protein, carbohydrate and lipid metabolism. In Homo sapiens (Human), this protein is ATP-citrate synthase (ACLY).